The primary structure comprises 1435 residues: MSAHTTAEQSPKRRRIHLDNDSKMHFSSILEDGTSKSQEALLPPRRARGYQLEMLSESLRQNIIVAMDTGSGKTEIAILRIQRELERCPAHKFVWFMAPTVALVEQQHSAISKQLPAFQTRLLTGAANVSHWSTKKIWDDILLNIRIVISTPQVLLDALSNGFVDLHTISLLVFDEAHHCVRDAPANRIMRDFYHYHRQEEGTDGLPHILGLTASPTTRARQTDLEVLEINLNAVCVTPKMHREEMMQFVHMPEYRSIEYQPDVQNFSSIVEKLSVIINELDIENDPFVKFMRRRNDLKSRQRLLDALENKKTPCLDQLKRCLRRSRVIHRELGPWASERFLTRCIMGLKSKQTNASGPQWADWDREDNSYMLNVLSQVVSSTEMGVQNPPDELSRKVHKLIDFLVLEHVNGSIGIVFAEERTIVIMLAQLLSLHPRTKHIKTTAFLGSSASVSRKSDITELHNPIDQSTAIDDLRTGKKDLIIATAVLEEGIDVPICDLVICFDLPKDLRSFIQRRGRARKKGSKFALFLHSEDRATSSELHLMEKTMKQLYLENKRALEHIQYLENVEEEGYDGFRVASTGALLTLSNARNHLSHFCGTLSAEFIATDPEFVLEGDDTTGFSAKVILPSFLDPKLREFRGILLWKTEKMAKRDASFQAYVALYEAGLVNDYLMPAHHHIDDEDGLEQVEKRPSFAKALGSLNPWAAIAKKWREAKHFYQNLIEISAGAQAFPPMVMVLPVELPCDISFRLFWNEHSTLLVSVKRGGQDFAADLIRLAADTTSILLSSLFSQKMVPGSLDFSWLFLPQMESIPSAIREWCDSVTGTISLHDIRDCDMAGFENPGLVRPMDNTARPCTFEKLVWRKYVPAETSDGASLSEQVTYDREVPHIEGRVWPKRTDFLHRLEPSNTSKAHHTAKCFYPANNCSVDRLPVEYSQFALFIPCLIHSIENYFIANELAQTILHPVGFSNLSLVLTAISSSAAREASNYQRLEFLGDSLLKLHTSIQLAADHPLWPEGRLTMRKGNIVSNGYLANAALQTGLDKFILTKPFTGAKWRPSYNTDHINTGDMTEPTREMSTKVLADVVEALIGAANIDGGENKILNCLKIFIPDIKWSPLNECVNILHHQEDSFSDENNNMLSEIEGLVGYTFKKKPLLLAAVTHPSSKGSGHSYQRLEFVGDSILDIIVVQELFESPRCFHHFDMHLMRTALVNADFLAFLCMNAYREEDRGEAVENSKRRVTVAMTKRRAYLWGFMKHSASWDIVNAQQRAAKQYEKLHEEIDEKLRSSKTYPWTLLCRLDAAKFFSDIVESILGAIFIDSQGSMPACRIFLERIGLIPYLKRVLSEDLDLMHPKERLGLLAGTLSVKYETKRTQGVEPQRWECAARVGDEEVVRVDCRVSRVDAETTAAEAAVAILKTRKLQSEASNKVAECD.

In terms of domain architecture, Helicase ATP-binding spans 54 to 234 (MLSESLRQNI…LEVLEINLNA (181 aa)). 67 to 74 (MDTGSGKT) provides a ligand contact to ATP. A DEAH box motif is present at residues 175–178 (DEAH). In terms of domain architecture, Helicase C-terminal spans 400–564 (KLIDFLVLEH…ENKRALEHIQ (165 aa)). The Dicer dsRNA-binding fold domain occupies 591-684 (ARNHLSHFCG…MPAHHHIDDE (94 aa)). 2 RNase III domains span residues 956 to 1099 (ANEL…IDGG) and 1141 to 1323 (LSEI…IDSQ). Positions 1178, 1309, and 1312 each coordinate Mg(2+).

Belongs to the helicase family. Dicer subfamily. It depends on Mg(2+) as a cofactor. Mn(2+) serves as cofactor.

Its function is as follows. Dicer-like endonuclease involved in cleaving double-stranded RNA in the RNA interference (RNAi) pathway. Produces 21 to 25 bp dsRNAs (siRNAs) which target the selective destruction of homologous RNAs leading to sequence-specific suppression of gene expression, called post-transcriptional gene silencing (PTGS). Part of a broad host defense response against viral infection and transposons. This Coccidioides immitis (strain RS) (Valley fever fungus) protein is Dicer-like protein 2 (DCL2).